A 216-amino-acid polypeptide reads, in one-letter code: Putative germin-like protein 2-1 (216 aa).

Residues 1-21 (MASTWFFLLALLAVSISNAFA) form the signal peptide. A disulfide bond links Cys31 and Cys46. The 151-residue stretch at 60–210 (SGLHMAGNTS…AFQVEKKIVD (151 aa)) folds into the Cupin type-1 domain. The N-linked (GlcNAc...) asparagine glycan is linked to Asn67. Residues His108, His110, Glu115, and His156 each contribute to the Mn(2+) site.

It belongs to the germin family. In terms of assembly, oligomer (believed to be a pentamer but probably hexamer).

The protein localises to the secreted. Its subcellular location is the extracellular space. It localises to the apoplast. Functionally, may play a role in plant defense. Probably has no oxalate oxidase activity even if the active site is conserved. This is Putative germin-like protein 2-1 from Oryza sativa subsp. japonica (Rice).